The primary structure comprises 419 residues: UDP-N-acetylglucosamine 1-carboxyvinyltransferase 2 (419 aa).

22-23 (KN) contacts phosphoenolpyruvate. Arg-92 contacts UDP-N-acetyl-alpha-D-glucosamine. Catalysis depends on Cys-116, which acts as the Proton donor. A 2-(S-cysteinyl)pyruvic acid O-phosphothioketal modification is found at Cys-116. UDP-N-acetyl-alpha-D-glucosamine contacts are provided by residues 121-125 (RPIDL), Asp-306, and Ile-328.

Belongs to the EPSP synthase family. MurA subfamily.

The protein localises to the cytoplasm. The catalysed reaction is phosphoenolpyruvate + UDP-N-acetyl-alpha-D-glucosamine = UDP-N-acetyl-3-O-(1-carboxyvinyl)-alpha-D-glucosamine + phosphate. Its pathway is cell wall biogenesis; peptidoglycan biosynthesis. Cell wall formation. Adds enolpyruvyl to UDP-N-acetylglucosamine. The protein is UDP-N-acetylglucosamine 1-carboxyvinyltransferase 2 of Streptococcus pyogenes serotype M3 (strain ATCC BAA-595 / MGAS315).